Reading from the N-terminus, the 233-residue chain is Large ribosomal subunit protein bL19c (233 aa).

Residues Met-1 to Arg-77 constitute a chloroplast transit peptide.

In terms of assembly, component of the chloroplast large ribosomal subunit (LSU). Mature 70S chloroplast ribosomes of higher plants consist of a small (30S) and a large (50S) subunit. The 30S small subunit contains 1 molecule of ribosomal RNA (16S rRNA) and 24 different proteins. The 50S large subunit contains 3 rRNA molecules (23S, 5S and 4.5S rRNA) and 33 different proteins.

It localises to the plastid. Its subcellular location is the chloroplast. In terms of biological role, component of the chloroplast ribosome (chloro-ribosome), a dedicated translation machinery responsible for the synthesis of chloroplast genome-encoded proteins, including proteins of the transcription and translation machinery and components of the photosynthetic apparatus. The polypeptide is Large ribosomal subunit protein bL19c (RPL19) (Spinacia oleracea (Spinach)).